The sequence spans 302 residues: Bifunctional protein FolD (302 aa).

NADP(+) is bound by residues 168 to 170 (GRS), Thr197, and Val238.

This sequence belongs to the tetrahydrofolate dehydrogenase/cyclohydrolase family. As to quaternary structure, homodimer.

It carries out the reaction (6R)-5,10-methylene-5,6,7,8-tetrahydrofolate + NADP(+) = (6R)-5,10-methenyltetrahydrofolate + NADPH. It catalyses the reaction (6R)-5,10-methenyltetrahydrofolate + H2O = (6R)-10-formyltetrahydrofolate + H(+). It functions in the pathway one-carbon metabolism; tetrahydrofolate interconversion. Functionally, catalyzes the oxidation of 5,10-methylenetetrahydrofolate to 5,10-methenyltetrahydrofolate and then the hydrolysis of 5,10-methenyltetrahydrofolate to 10-formyltetrahydrofolate. The sequence is that of Bifunctional protein FolD from Desulfatibacillum aliphaticivorans.